The following is a 161-amino-acid chain: Small ribosomal subunit protein uS9 (161 aa).

It belongs to the universal ribosomal protein uS9 family.

The sequence is that of Small ribosomal subunit protein uS9 from Bartonella henselae (strain ATCC 49882 / DSM 28221 / CCUG 30454 / Houston 1) (Rochalimaea henselae).